The chain runs to 577 residues: MASLVLSLRIAPSTPPLGLGGGRFRGRRGAVACRAATFQQLDAVAVREEESKFKAGAAEGCNILPLKRCIFSDHLTPVLAYRCLVREDDREAPSFLFESVEQGSEGTNVGRYSVVGAQPAMEIVAKANHVTVMDHKMKSRREQFAPDPMKIPRSIMEQWNPQIVEGLPDAFCGGWVGFFSYDTVRYVETKKLPFSNAPEDDRNLPDIHLGLYNDIVVFDHVEKKTHVIHWVRVDCHESVDEAYEDGKNQLEALLSRLHSVNVPTLTAGSVKLNVGQFGSALQKSSMSREDYKKAVVQAKEHILAGDIFQVVLSQRFERRTFADPFEVYRALRIVNPSPYMAYLQARGCILVASSPEILTRVEKRTIVNRPLAGTIRRGKSKAEDKVLEQLLLSDGKQCAEHIMLVDLGRNDVGKVSKPGSVKVEKLMNVERYSHVMHISSTVTGELRDDLTCWDALRAALPVGTVSGAPKVRAMELIDQMEGKMRGPYSGGFGGVSFRGDMDIALALRTIVFPTGSRFDTMYSYTDKNARQEWVAHLQAGAGIVADSKPDDEHQECLNKAAGLARAIDLAESTFVDE.

Residues 1–34 (MASLVLSLRIAPSTPPLGLGGGRFRGRRGAVACR) constitute a chloroplast transit peptide.

Belongs to the anthranilate synthase component I family. As to quaternary structure, heterotetramer consisting of two non-identical subunits: a beta subunit and a large alpha subunit.

The protein resides in the plastid. It localises to the chloroplast. It carries out the reaction chorismate + L-glutamine = anthranilate + pyruvate + L-glutamate + H(+). It participates in amino-acid biosynthesis; L-tryptophan biosynthesis; L-tryptophan from chorismate: step 1/5. Its activity is regulated as follows. Feedback inhibition by tryptophan. Part of a heterotetrameric complex that catalyzes the two-step biosynthesis of anthranilate, an intermediate in the biosynthesis of L-tryptophan. In the first step, the glutamine-binding beta subunit of anthranilate synthase (AS) provides the glutamine amidotransferase activity which generates ammonia as a substrate that, along with chorismate, is used in the second step, catalyzed by the large alpha subunit of AS to produce anthranilate. The protein is Anthranilate synthase alpha subunit 1, chloroplastic of Oryza sativa subsp. japonica (Rice).